Reading from the N-terminus, the 173-residue chain is Disulfide bond formation protein B (173 aa).

Residues 1-14 (MIEFLRRIAAHRLA) lie on the Cytoplasmic side of the membrane. The chain crosses the membrane as a helical span at residues 15–31 (WSLLAASALFLELSALF). Residues 32–49 (FQHVLGLHPCVMCVYERI) lie on the Periplasmic side of the membrane. An intrachain disulfide couples Cys41 to Cys44. A helical transmembrane segment spans residues 50–65 (ATLGVLTAGLLGMVAP). At 66–72 (QKWYVRW) the chain is on the cytoplasmic side. The helical transmembrane segment at 73–90 (SALLLWGSSAFWGLKLAL) threads the bilayer. Residues 91–145 (KHVDYQVNPSPFNVCEGFVDFPSWAPLDQWIPWMFYPDGDCSEVTWQFLSFSMPQ) are Periplasmic-facing. Cysteines 105 and 131 form a disulfide. Residues 146-164 (WLVAIFAVYLLVFVVVAIG) form a helical membrane-spanning segment. Residues 165 to 173 (NLVKGRCCS) lie on the Cytoplasmic side of the membrane.

The protein belongs to the DsbB family.

The protein resides in the cell inner membrane. Required for disulfide bond formation in some periplasmic proteins. Acts by oxidizing the DsbA protein. This chain is Disulfide bond formation protein B, found in Aeromonas hydrophila subsp. hydrophila (strain ATCC 7966 / DSM 30187 / BCRC 13018 / CCUG 14551 / JCM 1027 / KCTC 2358 / NCIMB 9240 / NCTC 8049).